The primary structure comprises 91 residues: C-C motif chemokine 5 (91 aa).

A signal peptide spans 1-23; that stretch reads MKISAAVLTVVLMAASLCAPASA. 2 cysteine pairs are disulfide-bonded: C33–C57 and C34–C73.

This sequence belongs to the intercrine beta (chemokine CC) family.

The protein resides in the secreted. Functionally, chemoattractant for blood monocytes, memory T-helper cells and eosinophils. Causes the release of histamine from basophils and activates eosinophils. May activate several chemokine receptors including CCR1, CCR3, CCR4 and CCR5. May also be an agonist of the G protein-coupled receptor GPR75. Together with GPR75, may play a role in neuron survival through activation of a downstream signaling pathway involving the PI3, Akt and MAP kinases. By activating GPR75 may also play a role in insulin secretion by islet cells. This Sigmodon hispidus (Hispid cotton rat) protein is C-C motif chemokine 5 (CCL5).